Consider the following 240-residue polypeptide: Uridylate kinase (240 aa).

Lys13–Gly16 is a binding site for ATP. The tract at residues Gly21–Gly26 is involved in allosteric activation by GTP. A UMP-binding site is contributed by Gly55. 2 residues coordinate ATP: Gly56 and Arg60. UMP is bound by residues Asp75 and Thr137–Thr144. The ATP site is built by Thr164, Tyr170, and Asp173.

It belongs to the UMP kinase family. In terms of assembly, homohexamer.

Its subcellular location is the cytoplasm. It carries out the reaction UMP + ATP = UDP + ADP. It participates in pyrimidine metabolism; CTP biosynthesis via de novo pathway; UDP from UMP (UMPK route): step 1/1. Allosterically activated by GTP. Inhibited by UTP. Catalyzes the reversible phosphorylation of UMP to UDP. This Aquifex aeolicus (strain VF5) protein is Uridylate kinase.